A 502-amino-acid chain; its full sequence is ATP synthase subunit alpha (502 aa).

The interval 115–135 is disordered; it reads VDGLGPINTTNTRPIESPAPG. 169-176 contacts ATP; the sequence is GDRQTGKT.

It belongs to the ATPase alpha/beta chains family. F-type ATPases have 2 components, CF(1) - the catalytic core - and CF(0) - the membrane proton channel. CF(1) has five subunits: alpha(3), beta(3), gamma(1), delta(1), epsilon(1). CF(0) has three main subunits: a(1), b(2) and c(9-12). The alpha and beta chains form an alternating ring which encloses part of the gamma chain. CF(1) is attached to CF(0) by a central stalk formed by the gamma and epsilon chains, while a peripheral stalk is formed by the delta and b chains.

It is found in the cell membrane. It catalyses the reaction ATP + H2O + 4 H(+)(in) = ADP + phosphate + 5 H(+)(out). In terms of biological role, produces ATP from ADP in the presence of a proton gradient across the membrane. The alpha chain is a regulatory subunit. This chain is ATP synthase subunit alpha, found in Bacillus cereus (strain G9842).